We begin with the raw amino-acid sequence, 130 residues long: MTRSSVLADALNAINNAEKTGKRQVLLRPSSKVIIKFLQVMQKHGYIGEFEYIDDHRSGKIVVQLNGRLNKCGVISPRFNVKIGDIEKWTANLLPARQFGYVILTTSAGIMDHEEARRKHVSGKILGFVY.

This sequence belongs to the universal ribosomal protein uS8 family. Component of the small ribosomal subunit (SSU). Mature yeast ribosomes consist of a small (40S) and a large (60S) subunit. The 40S small subunit contains 1 molecule of ribosomal RNA (18S rRNA) and 33 different proteins (encoded by 57 genes). The large 60S subunit contains 3 rRNA molecules (25S, 5.8S and 5S rRNA) and 46 different proteins (encoded by 81 genes).

The protein localises to the cytoplasm. Component of the ribosome, a large ribonucleoprotein complex responsible for the synthesis of proteins in the cell. The small ribosomal subunit (SSU) binds messenger RNAs (mRNAs) and translates the encoded message by selecting cognate aminoacyl-transfer RNA (tRNA) molecules. The large subunit (LSU) contains the ribosomal catalytic site termed the peptidyl transferase center (PTC), which catalyzes the formation of peptide bonds, thereby polymerizing the amino acids delivered by tRNAs into a polypeptide chain. The nascent polypeptides leave the ribosome through a tunnel in the LSU and interact with protein factors that function in enzymatic processing, targeting, and the membrane insertion of nascent chains at the exit of the ribosomal tunnel. The chain is Small ribosomal subunit protein uS8B from Saccharomyces cerevisiae (strain ATCC 204508 / S288c) (Baker's yeast).